Reading from the N-terminus, the 134-residue chain is ATP synthase epsilon chain (134 aa).

It belongs to the ATPase epsilon chain family. F-type ATPases have 2 components, CF(1) - the catalytic core - and CF(0) - the membrane proton channel. CF(1) has five subunits: alpha(3), beta(3), gamma(1), delta(1), epsilon(1). CF(0) has three main subunits: a, b and c.

Its subcellular location is the cell membrane. Functionally, produces ATP from ADP in the presence of a proton gradient across the membrane. The protein is ATP synthase epsilon chain of Alkaliphilus oremlandii (strain OhILAs) (Clostridium oremlandii (strain OhILAs)).